We begin with the raw amino-acid sequence, 182 residues long: LPS-assembly lipoprotein LptE (182 aa).

The N-terminal stretch at 1-19 (MRHRILTLLLGLAVLVTAG) is a signal peptide. Cys20 is lipidated: N-palmitoyl cysteine. A lipid anchor (S-diacylglycerol cysteine) is attached at Cys20.

It belongs to the LptE lipoprotein family. As to quaternary structure, component of the lipopolysaccharide transport and assembly complex. Interacts with LptD.

The protein resides in the cell outer membrane. Functionally, together with LptD, is involved in the assembly of lipopolysaccharide (LPS) at the surface of the outer membrane. Required for the proper assembly of LptD. Binds LPS and may serve as the LPS recognition site at the outer membrane. The protein is LPS-assembly lipoprotein LptE of Photorhabdus laumondii subsp. laumondii (strain DSM 15139 / CIP 105565 / TT01) (Photorhabdus luminescens subsp. laumondii).